Reading from the N-terminus, the 513-residue chain is 2-isopropylmalate synthase (513 aa).

Positions isoleucine 4–alanine 266 constitute a Pyruvate carboxyltransferase domain. 4 residues coordinate Mn(2+): aspartate 13, histidine 201, histidine 203, and asparagine 237. Residues isoleucine 390–isoleucine 513 form a regulatory domain region.

Belongs to the alpha-IPM synthase/homocitrate synthase family. LeuA type 1 subfamily. Homodimer. Mn(2+) serves as cofactor.

The protein resides in the cytoplasm. It carries out the reaction 3-methyl-2-oxobutanoate + acetyl-CoA + H2O = (2S)-2-isopropylmalate + CoA + H(+). Its pathway is amino-acid biosynthesis; L-leucine biosynthesis; L-leucine from 3-methyl-2-oxobutanoate: step 1/4. Its function is as follows. Catalyzes the condensation of the acetyl group of acetyl-CoA with 3-methyl-2-oxobutanoate (2-ketoisovalerate) to form 3-carboxy-3-hydroxy-4-methylpentanoate (2-isopropylmalate). This chain is 2-isopropylmalate synthase, found in Lactococcus lactis subsp. lactis (strain IL1403) (Streptococcus lactis).